The following is a 265-amino-acid chain: Eukaryotic translation initiation factor 3 subunit J (265 aa).

Disordered regions lie at residues 1–113 (MPPS…DSDL) and 215–237 (SNEKMKEERAADKGSKKTKAAKT). The segment covering 27 to 45 (DEEDGDVLDSWDAADDSEV) has biased composition (acidic residues). A coiled-coil region spans residues 43–95 (SEVEREKAAKAAEAKAKAEAEAAANKKSKAQRIAEHKTRRKAAEDEEDDESDE). Residues 46–62 (EREKAAKAAEAKAKAEA) are compositionally biased toward basic and acidic residues. Over residues 86–97 (EDEEDDESDEDE) the composition is skewed to acidic residues. 2 stretches are compositionally biased toward basic and acidic residues: residues 98–113 (AEKRARLRRTEKDSDL) and 217–229 (EKMKEERAADKGS).

It belongs to the eIF-3 subunit J family. As to quaternary structure, component of the eukaryotic translation initiation factor 3 (eIF-3) complex.

The protein localises to the cytoplasm. Its function is as follows. Component of the eukaryotic translation initiation factor 3 (eIF-3) complex, which is involved in protein synthesis of a specialized repertoire of mRNAs and, together with other initiation factors, stimulates binding of mRNA and methionyl-tRNAi to the 40S ribosome. The eIF-3 complex specifically targets and initiates translation of a subset of mRNAs involved in cell proliferation. This is Eukaryotic translation initiation factor 3 subunit J (hcr1) from Emericella nidulans (strain FGSC A4 / ATCC 38163 / CBS 112.46 / NRRL 194 / M139) (Aspergillus nidulans).